A 692-amino-acid chain; its full sequence is Elongation factor G (692 aa).

The region spanning Asn8–Thr283 is the tr-type G domain. Residues Ala17–Thr24, Asp81–His85, and Asn135–Asp138 contribute to the GTP site.

It belongs to the TRAFAC class translation factor GTPase superfamily. Classic translation factor GTPase family. EF-G/EF-2 subfamily.

The protein localises to the cytoplasm. Its function is as follows. Catalyzes the GTP-dependent ribosomal translocation step during translation elongation. During this step, the ribosome changes from the pre-translocational (PRE) to the post-translocational (POST) state as the newly formed A-site-bound peptidyl-tRNA and P-site-bound deacylated tRNA move to the P and E sites, respectively. Catalyzes the coordinated movement of the two tRNA molecules, the mRNA and conformational changes in the ribosome. The chain is Elongation factor G (fusA) from Helicobacter pylori (strain ATCC 700392 / 26695) (Campylobacter pylori).